Here is a 332-residue protein sequence, read N- to C-terminus: Glycerol-3-phosphate dehydrogenase [NAD(P)+] (332 aa).

Residues Ser11, Phe12, Lys32, and Lys106 each coordinate NADPH. Sn-glycerol 3-phosphate-binding residues include Lys106, Gly137, and Ser139. Residue Ala141 coordinates NADPH. Lys192, Asp245, Ser255, Arg256, and Asn257 together coordinate sn-glycerol 3-phosphate. Catalysis depends on Lys192, which acts as the Proton acceptor. An NADPH-binding site is contributed by Arg256. Residues Val280 and Glu282 each coordinate NADPH.

It belongs to the NAD-dependent glycerol-3-phosphate dehydrogenase family.

The protein localises to the cytoplasm. The enzyme catalyses sn-glycerol 3-phosphate + NAD(+) = dihydroxyacetone phosphate + NADH + H(+). It carries out the reaction sn-glycerol 3-phosphate + NADP(+) = dihydroxyacetone phosphate + NADPH + H(+). It participates in membrane lipid metabolism; glycerophospholipid metabolism. Catalyzes the reduction of the glycolytic intermediate dihydroxyacetone phosphate (DHAP) to sn-glycerol 3-phosphate (G3P), the key precursor for phospholipid synthesis. This chain is Glycerol-3-phosphate dehydrogenase [NAD(P)+], found in Staphylococcus aureus (strain USA300).